We begin with the raw amino-acid sequence, 348 residues long: Lipoyl synthase (348 aa).

Residues 1 to 45 (MSESAKPRITSGSKFRNEHGFSAIKDGVKRSSSNTEGKSLERKPK) form a disordered region. The [4Fe-4S] cluster site is built by C73, C78, C84, C99, C103, C106, and S314. One can recognise a Radical SAM core domain in the interval 85 to 303 (WTNGTATIMV…RDIGLEKGFM (219 aa)).

It belongs to the radical SAM superfamily. Lipoyl synthase family. [4Fe-4S] cluster is required as a cofactor.

It localises to the cytoplasm. The catalysed reaction is [[Fe-S] cluster scaffold protein carrying a second [4Fe-4S](2+) cluster] + N(6)-octanoyl-L-lysyl-[protein] + 2 oxidized [2Fe-2S]-[ferredoxin] + 2 S-adenosyl-L-methionine + 4 H(+) = [[Fe-S] cluster scaffold protein] + N(6)-[(R)-dihydrolipoyl]-L-lysyl-[protein] + 4 Fe(3+) + 2 hydrogen sulfide + 2 5'-deoxyadenosine + 2 L-methionine + 2 reduced [2Fe-2S]-[ferredoxin]. Its pathway is protein modification; protein lipoylation via endogenous pathway; protein N(6)-(lipoyl)lysine from octanoyl-[acyl-carrier-protein]: step 2/2. Catalyzes the radical-mediated insertion of two sulfur atoms into the C-6 and C-8 positions of the octanoyl moiety bound to the lipoyl domains of lipoate-dependent enzymes, thereby converting the octanoylated domains into lipoylated derivatives. The polypeptide is Lipoyl synthase (Marinobacter nauticus (strain ATCC 700491 / DSM 11845 / VT8) (Marinobacter aquaeolei)).